Reading from the N-terminus, the 354-residue chain is Uroporphyrinogen decarboxylase (354 aa).

Residues 27-31, aspartate 77, tyrosine 154, threonine 209, and histidine 327 contribute to the substrate site; that span reads RQAGR.

The protein belongs to the uroporphyrinogen decarboxylase family. In terms of assembly, homodimer.

The protein resides in the cytoplasm. It carries out the reaction uroporphyrinogen III + 4 H(+) = coproporphyrinogen III + 4 CO2. The protein operates within porphyrin-containing compound metabolism; protoporphyrin-IX biosynthesis; coproporphyrinogen-III from 5-aminolevulinate: step 4/4. In terms of biological role, catalyzes the decarboxylation of four acetate groups of uroporphyrinogen-III to yield coproporphyrinogen-III. The polypeptide is Uroporphyrinogen decarboxylase (Escherichia coli O7:K1 (strain IAI39 / ExPEC)).